The following is a 218-amino-acid chain: NADH-ubiquinone oxidoreductase 21 kDa subunit, mitochondrial (218 aa).

A mitochondrion-targeting transit peptide spans 1 to 33; that stretch reads MSALRITTASAARMLRTSNAMMPSVMGAAQRRA. The segment at 31–74 is disordered; it reads RRALSDSAEPARVPSVESARVPEKLAKEDSPLATPKRNSPDYNV. Basic and acidic residues predominate over residues 50 to 60; that stretch reads RVPEKLAKEDS.

The protein belongs to the complex I NDUFS4 subunit family. In terms of assembly, complex I is composed of about 40 different subunits. This is a component of the iron-sulfur (IP) fragment of the enzyme.

The protein localises to the mitochondrion inner membrane. In terms of biological role, accessory subunit of the mitochondrial membrane respiratory chain NADH dehydrogenase (Complex I), that is believed not to be involved in catalysis. Complex I functions in the transfer of electrons from NADH to the respiratory chain. The immediate electron acceptor for the enzyme is believed to be ubiquinone. The sequence is that of NADH-ubiquinone oxidoreductase 21 kDa subunit, mitochondrial (nuo-21) from Neurospora crassa (strain ATCC 24698 / 74-OR23-1A / CBS 708.71 / DSM 1257 / FGSC 987).